Consider the following 117-residue polypeptide: Cuticle protein CP1246 (117 aa).

4 tandem repeats follow at residues 1–17, 26–43, 67–84, and 93–110.

In terms of tissue distribution, calcified shell.

The polypeptide is Cuticle protein CP1246 (Cancer pagurus (Rock crab)).